Consider the following 209-residue polypeptide: Outer-membrane lipoprotein carrier protein (209 aa).

The signal sequence occupies residues 1–21 (MHRQLRYAVLATALFASTAFA).

It belongs to the LolA family. In terms of assembly, monomer.

The protein localises to the periplasm. In terms of biological role, participates in the translocation of lipoproteins from the inner membrane to the outer membrane. Only forms a complex with a lipoprotein if the residue after the N-terminal Cys is not an aspartate (The Asp acts as a targeting signal to indicate that the lipoprotein should stay in the inner membrane). In Xanthomonas oryzae pv. oryzae (strain MAFF 311018), this protein is Outer-membrane lipoprotein carrier protein.